A 359-amino-acid chain; its full sequence is ATP synthase subunit gamma, chloroplastic (359 aa).

The transit peptide at 1-35 directs the protein to the chloroplast; it reads MSCSHLSTAWSSSALASSASTTRRRSPPRSGLLVR. The active site involves Cys124. A disulfide bridge links Cys234 with Cys240.

This sequence belongs to the ATPase gamma chain family. F-type ATPases have 2 components, CF(1) - the catalytic core - and CF(0) - the membrane proton channel. CF(1) has five subunits: alpha(3), beta(3), gamma(1), delta(1), epsilon(1). CF(0) has four main subunits: a, b, b' and c.

The protein localises to the plastid. Its subcellular location is the chloroplast thylakoid membrane. Its function is as follows. Produces ATP from ADP in the presence of a proton gradient across the membrane. The gamma chain is believed to be important in regulating ATPase activity and the flow of protons through the CF(0) complex. Inceptin is a proteolytic fragment produced by insect larvae that previously ingested the protein. This peptide mediate plant perception of herbivory through the induction of volatile, phenylpropanoid and protease inhibitor defenses such as ethylene, jasmonic acid and salicylic acid for example. This chain is ATP synthase subunit gamma, chloroplastic, found in Zea mays (Maize).